The following is a 78-amino-acid chain: Small ribosomal subunit protein bS16c (78 aa).

Belongs to the bacterial ribosomal protein bS16 family.

It is found in the plastid. Its subcellular location is the chloroplast. The chain is Small ribosomal subunit protein bS16c from Panax ginseng (Korean ginseng).